The sequence spans 1059 residues: Dihydropyrimidine dehydrogenase [NADP(+)] (1059 aa).

Residues 84-118 (ERGALKEAMRCLKCADAPCQKSCPTQLDVKSFITS) enclose the 4Fe-4S ferredoxin-type 1 domain. Residues Cys94, Cys97, Cys102, Cys106, Cys145, Cys151, Cys155, and Gln171 each coordinate [4Fe-4S] cluster. Residues 207-211 (GCGPA), 231-239 (EKRAYIGGL), Arg248, and Leu274 each bind FAD. Residues 354–357 (AGDT), 378–379 (RK), Arg385, 451–453 (AFG), and 495–501 (DVAGVAE) each bind NADP(+). 494 to 503 (GDVAGVAETT) contributes to the FAD binding site. Residues Ser564 and 588–589 (KT) contribute to the FMN site. Residues Asn623 and 682–684 (NLS) each bind substrate. The active-site Proton acceptor is the Cys685. Lys723 serves as a coordination point for FMN. 750–751 (NT) lines the substrate pocket. FMN is bound by residues Gly781, 807–809 (TGG), and 830–831 (CS). 2 4Fe-4S ferredoxin-type domains span residues 955 to 987 (KVAI…FDPV) and 989 to 1019 (HQPH…MVPR). Positions 964, 967, 970, 974, 998, 1001, 1004, and 1008 each coordinate [4Fe-4S] cluster.

It belongs to the dihydropyrimidine dehydrogenase family. Requires [4Fe-4S] cluster as cofactor. FAD is required as a cofactor. The cofactor is FMN.

It catalyses the reaction 5,6-dihydrouracil + NADP(+) = uracil + NADPH + H(+). Its pathway is amino-acid biosynthesis; beta-alanine biosynthesis. Functionally, involved in pyrimidine base degradation. Catalyzes the reduction of uracil and thymine. Involved in the degradation of the chemotherapeutic drug 5-fluorouracil. The chain is Dihydropyrimidine dehydrogenase [NADP(+)] (dpyd-1) from Caenorhabditis elegans.